The primary structure comprises 991 residues: Transcription factor ROB1 (991 aa).

A DNA-binding region (zn(2)-C6 fungal-type) is located at residues 17-43 (CTVCRTIKRKCDGNTPCSNCLKRNQEC). Disordered stretches follow at residues 150-188 (LNQQQQQQQPSPQSLSQSSASEVSTRSSPASPNSTISLA), 792-875 (FYAQ…EDNP), and 901-959 (QEEG…PQLP). Low complexity predominate over residues 152–168 (QQQQQQQPSPQSLSQSS). Positions 169–187 (ASEVSTRSSPASPNSTISL) are enriched in polar residues. Residues 795 to 806 (QQQQQQQQQQQQ) are compositionally biased toward low complexity. Basic and acidic residues-rich tracts occupy residues 807-817 (PKHEYHDHQQE) and 825-855 (QEEHSEKDIKIEIKDEPQPQEEHIHQDYPMK). The span at 907–931 (QQQQQQQQEQVQQEQVQQEQVQQDQ) shows a compositional bias: low complexity.

Its subcellular location is the nucleus. In terms of biological role, transcription factor that mediates conventional biofilm formation and plays a key role in microcolony formation under both flow and static conditions and to epithelial surfaces. Modulates infection of mammalian hosts. The protein is Transcription factor ROB1 of Candida albicans (strain SC5314 / ATCC MYA-2876) (Yeast).